Reading from the N-terminus, the 760-residue chain is Mitochondrial intermediate peptidase (760 aa).

Residues M1–F19 constitute a mitochondrion transit peptide. H543 lines the Zn(2+) pocket. Residue E544 is part of the active site. H547 provides a ligand contact to Zn(2+).

Belongs to the peptidase M3 family. Zn(2+) is required as a cofactor.

Its subcellular location is the mitochondrion matrix. It carries out the reaction Release of an N-terminal octapeptide as second stage of processing of some proteins imported into the mitochondrion.. Functionally, cleaves proteins, imported into the mitochondrion, to their mature size. While most mitochondrial precursor proteins are processed to the mature form in one step by mitochondrial processing peptidase (MPP), the sequential cleavage by MIP of an octapeptide after initial processing by MPP is a required step for a subgroup of nuclear-encoded precursor proteins destined for the matrix or the inner membrane. The protein is Mitochondrial intermediate peptidase (OCT1) of Leucoagaricus gongylophorus (Leaf-cutting ant fungus).